Here is a 162-residue protein sequence, read N- to C-terminus: Probable metalloprotease y4jG (162 aa).

The MPN domain occupies 9-147; sequence TVALPRDCVS…YRLDAKANWN (139 aa). Zn(2+) contacts are provided by histidine 94, histidine 96, and aspartate 107.

Belongs to the peptidase M67B family.

The protein is Probable metalloprotease y4jG of Sinorhizobium fredii (strain NBRC 101917 / NGR234).